A 120-amino-acid chain; its full sequence is NAD(P)H-quinone oxidoreductase subunit 3, chloroplastic (120 aa).

The next 3 helical transmembrane spans lie at Ile9–Gly29, Met64–Met84, and Val88–Leu108.

Belongs to the complex I subunit 3 family. As to quaternary structure, NDH is composed of at least 16 different subunits, 5 of which are encoded in the nucleus.

Its subcellular location is the plastid. The protein resides in the chloroplast thylakoid membrane. The catalysed reaction is a plastoquinone + NADH + (n+1) H(+)(in) = a plastoquinol + NAD(+) + n H(+)(out). The enzyme catalyses a plastoquinone + NADPH + (n+1) H(+)(in) = a plastoquinol + NADP(+) + n H(+)(out). In terms of biological role, NDH shuttles electrons from NAD(P)H:plastoquinone, via FMN and iron-sulfur (Fe-S) centers, to quinones in the photosynthetic chain and possibly in a chloroplast respiratory chain. The immediate electron acceptor for the enzyme in this species is believed to be plastoquinone. Couples the redox reaction to proton translocation, and thus conserves the redox energy in a proton gradient. The sequence is that of NAD(P)H-quinone oxidoreductase subunit 3, chloroplastic from Draba nemorosa (Woodland whitlowgrass).